We begin with the raw amino-acid sequence, 431 residues long: Enolase (431 aa).

Residue glutamine 175 participates in (2R)-2-phosphoglycerate binding. The Proton donor role is filled by glutamate 217. Mg(2+) contacts are provided by aspartate 254, glutamate 295, and aspartate 322. Positions 347, 376, 377, and 398 each coordinate (2R)-2-phosphoglycerate. The Proton acceptor role is filled by lysine 347.

The protein belongs to the enolase family. Requires Mg(2+) as cofactor.

It localises to the cytoplasm. Its subcellular location is the secreted. The protein localises to the cell surface. It carries out the reaction (2R)-2-phosphoglycerate = phosphoenolpyruvate + H2O. It functions in the pathway carbohydrate degradation; glycolysis; pyruvate from D-glyceraldehyde 3-phosphate: step 4/5. Functionally, catalyzes the reversible conversion of 2-phosphoglycerate (2-PG) into phosphoenolpyruvate (PEP). It is essential for the degradation of carbohydrates via glycolysis. The sequence is that of Enolase from Anaplasma marginale (strain St. Maries).